A 166-amino-acid polypeptide reads, in one-letter code: MSDEDHDFSHQGGGDNASKTYPLPAGALKKGGYVCINGRPCKVIDLSVSKTGKHGHAKVSIVATDIFTGNRLEDQAPSTHNVEVPFVKTFTYSVLDIQPNEDPSLPSHLSLMDDEGESREDLDMPPDVALATQIKEQFDSGKEVLVVVVSAMGTEQVLQTKNAAEK.

A disordered region spans residues 1–21; the sequence is MSDEDHDFSHQGGGDNASKTY. Lys53 is subject to Hypusine. The segment at 101–121 is disordered; sequence EDPSLPSHLSLMDDEGESRED. Over residues 112 to 121 the composition is skewed to acidic residues; sequence MDDEGESRED.

This sequence belongs to the eIF-5A family. In terms of processing, lys-53 undergoes hypusination, a unique post-translational modification that consists in the addition of a butylamino group from spermidine to lysine side chain, leading to the formation of the unusual amino acid hypusine. eIF-5As are the only known proteins to undergo this modification, which is essential for their function.

Its subcellular location is the cytoplasm. Translation factor that promotes translation elongation and termination, particularly upon ribosome stalling at specific amino acid sequence contexts. Binds between the exit (E) and peptidyl (P) site of the ribosome and promotes rescue of stalled ribosome: specifically required for efficient translation of polyproline-containing peptides as well as other motifs that stall the ribosome. Acts as a ribosome quality control (RQC) cofactor by joining the RQC complex to facilitate peptidyl transfer during CAT tailing step. This chain is Eukaryotic translation initiation factor 5A, found in Leishmania donovani.